Consider the following 95-residue polypeptide: Co-chaperonin GroES (95 aa).

It belongs to the GroES chaperonin family. In terms of assembly, heptamer of 7 subunits arranged in a ring. Interacts with the chaperonin GroEL.

Its subcellular location is the cytoplasm. Together with the chaperonin GroEL, plays an essential role in assisting protein folding. The GroEL-GroES system forms a nano-cage that allows encapsulation of the non-native substrate proteins and provides a physical environment optimized to promote and accelerate protein folding. GroES binds to the apical surface of the GroEL ring, thereby capping the opening of the GroEL channel. This is Co-chaperonin GroES from Methylocella silvestris (strain DSM 15510 / CIP 108128 / LMG 27833 / NCIMB 13906 / BL2).